A 500-amino-acid polypeptide reads, in one-letter code: GTPase Der (500 aa).

EngA-type G domains follow at residues 3–166 (PVVA…MEEL) and 211–384 (IKLA…VSAT). GTP-binding positions include 9–16 (GRPNVGKS), 56–60 (DTGGI), 118–121 (NKID), 217–224 (GRPNVGKS), 264–268 (DTAGV), and 329–332 (NKWD). Residues 385–469 (KRVGTSVLTR…PIRIQFQNSE (85 aa)) form the KH-like domain. The disordered stretch occupies residues 468 to 500 (SENPFEDRGGKLTMSQERQRKRLLGAVKNRNKK). The segment covering 486-500 (QRKRLLGAVKNRNKK) has biased composition (basic residues).

The protein belongs to the TRAFAC class TrmE-Era-EngA-EngB-Septin-like GTPase superfamily. EngA (Der) GTPase family. As to quaternary structure, associates with the 50S ribosomal subunit.

GTPase that plays an essential role in the late steps of ribosome biogenesis. This chain is GTPase Der, found in Aliivibrio fischeri (strain ATCC 700601 / ES114) (Vibrio fischeri).